The chain runs to 562 residues: Probable malate:quinone oxidoreductase (562 aa).

Positions 530–562 are disordered; sequence EVPDKSATPTDPTIAPKHQHSTTHNANSEMQAL. Residues 551–562 are compositionally biased toward polar residues; the sequence is TTHNANSEMQAL.

Belongs to the MQO family. The cofactor is FAD.

The catalysed reaction is (S)-malate + a quinone = a quinol + oxaloacetate. It participates in carbohydrate metabolism; tricarboxylic acid cycle; oxaloacetate from (S)-malate (quinone route): step 1/1. The chain is Probable malate:quinone oxidoreductase from Xylella fastidiosa (strain M12).